The sequence spans 376 residues: Protein-glutamate methylesterase/protein-glutamine glutaminase 1 (376 aa).

Residues 4-121 (KVLVVDDSSF…ARNRDEAVSL (118 aa)) enclose the Response regulatory domain. A 4-aspartylphosphate modification is found at aspartate 55. Residues 138 to 174 (RPVASSTPVQERPQSTLNRPTTGLRREAPAQAPVSRA) are disordered. Residues 141–158 (ASSTPVQERPQSTLNRPT) show a composition bias toward polar residues. Positions 183-376 (SGKKYQLTAI…ERMLVEVGLA (194 aa)) constitute a CheB-type methylesterase domain. Residues serine 195, histidine 222, and aspartate 318 contribute to the active site.

It belongs to the CheB family. Phosphorylated by CheA. Phosphorylation of the N-terminal regulatory domain activates the methylesterase activity.

It localises to the cytoplasm. The catalysed reaction is [protein]-L-glutamate 5-O-methyl ester + H2O = L-glutamyl-[protein] + methanol + H(+). It carries out the reaction L-glutaminyl-[protein] + H2O = L-glutamyl-[protein] + NH4(+). Its function is as follows. Involved in chemotaxis. Part of a chemotaxis signal transduction system that modulates chemotaxis in response to various stimuli. Catalyzes the demethylation of specific methylglutamate residues introduced into the chemoreceptors (methyl-accepting chemotaxis proteins or MCP) by CheR. Also mediates the irreversible deamidation of specific glutamine residues to glutamic acid. The sequence is that of Protein-glutamate methylesterase/protein-glutamine glutaminase 1 from Vibrio vulnificus (strain CMCP6).